We begin with the raw amino-acid sequence, 692 residues long: Elongation factor G 2 (692 aa).

In terms of domain architecture, tr-type G spans 8–283 (KDVRNIGIMA…GVVNYLPSPL (276 aa)). Residues 17 to 24 (AHIDAGKT), 81 to 85 (DTPGH), and 135 to 138 (NKMD) each bind GTP.

The protein belongs to the TRAFAC class translation factor GTPase superfamily. Classic translation factor GTPase family. EF-G/EF-2 subfamily.

It is found in the cytoplasm. Functionally, catalyzes the GTP-dependent ribosomal translocation step during translation elongation. During this step, the ribosome changes from the pre-translocational (PRE) to the post-translocational (POST) state as the newly formed A-site-bound peptidyl-tRNA and P-site-bound deacylated tRNA move to the P and E sites, respectively. Catalyzes the coordinated movement of the two tRNA molecules, the mRNA and conformational changes in the ribosome. This chain is Elongation factor G 2, found in Desulfotalea psychrophila (strain LSv54 / DSM 12343).